Reading from the N-terminus, the 234-residue chain is Large ribosomal subunit protein uL1 (234 aa).

Belongs to the universal ribosomal protein uL1 family. In terms of assembly, part of the 50S ribosomal subunit.

Its function is as follows. Binds directly to 23S rRNA. The L1 stalk is quite mobile in the ribosome, and is involved in E site tRNA release. Functionally, protein L1 is also a translational repressor protein, it controls the translation of the L11 operon by binding to its mRNA. The chain is Large ribosomal subunit protein uL1 from Aliivibrio fischeri (strain ATCC 700601 / ES114) (Vibrio fischeri).